Reading from the N-terminus, the 105-residue chain is MRLIDTLMRLSAAEEFFEVLAVPYDPAVLRVARLHILRRMGERLSGTDLAALPDGAVRALARSALEAAYAEFTRTRPIDARVFQVLKTARHPRGRSFVPLSSLRR.

The protein belongs to the NifW family. In terms of assembly, homotrimer; associates with NifD.

Functionally, may protect the nitrogenase Fe-Mo protein from oxidative damage. This Rhodospirillum centenum (strain ATCC 51521 / SW) protein is Nitrogenase-stabilizing/protective protein NifW.